The chain runs to 447 residues: Argininosuccinate synthase (447 aa).

ATP-binding positions include 17–25 (AFSGGLDTS) and Ala-43. Residue Tyr-99 coordinates L-citrulline. Residues Gly-129 and Thr-131 each contribute to the ATP site. The L-aspartate site is built by Thr-131, Asn-135, and Asp-136. Position 135 (Asn-135) interacts with L-citrulline. Asp-136 contacts ATP. Residues Arg-139 and Ser-192 each coordinate L-citrulline. Asp-194 is an ATP binding site. The L-citrulline site is built by Thr-201, Glu-203, and Glu-280.

Belongs to the argininosuccinate synthase family. Type 2 subfamily. Homotetramer.

It localises to the cytoplasm. The enzyme catalyses L-citrulline + L-aspartate + ATP = 2-(N(omega)-L-arginino)succinate + AMP + diphosphate + H(+). Its pathway is amino-acid biosynthesis; L-arginine biosynthesis; L-arginine from L-ornithine and carbamoyl phosphate: step 2/3. The sequence is that of Argininosuccinate synthase (argG) from Salmonella typhi.